Reading from the N-terminus, the 582-residue chain is Cryptochrome DASH, chloroplastic/mitochondrial (582 aa).

Residues Met1–Ala49 constitute a chloroplast and mitochondrion transit peptide. In terms of domain architecture, Photolyase/cryptochrome alpha/beta spans Gly84–Leu234. The interval Gly560–Lys582 is disordered. Residues Arg570–Lys582 show a composition bias toward basic residues.

The protein belongs to the DNA photolyase class-1 family. It depends on FAD as a cofactor. (6R)-5,10-methylene-5,6,7,8-tetrahydrofolate serves as cofactor.

The protein localises to the plastid. It is found in the chloroplast. It localises to the mitochondrion. Functionally, may have a photoreceptor function. Binds ss- and ds-DNA in a sequence non-specific manner, lacks photolyase activity. The protein is Cryptochrome DASH, chloroplastic/mitochondrial (CRYD) of Oryza sativa subsp. japonica (Rice).